The following is a 549-amino-acid chain: Chaperonin GroEL 5 (549 aa).

Residues 30–33 (TLGP), Lys51, 87–91 (DGTTT), Gly415, and Asp495 contribute to the ATP site.

It belongs to the chaperonin (HSP60) family. In terms of assembly, forms a cylinder of 14 subunits composed of two heptameric rings stacked back-to-back. Interacts with the co-chaperonin GroES.

Its subcellular location is the cytoplasm. It carries out the reaction ATP + H2O + a folded polypeptide = ADP + phosphate + an unfolded polypeptide.. In terms of biological role, together with its co-chaperonin GroES, plays an essential role in assisting protein folding. The GroEL-GroES system forms a nano-cage that allows encapsulation of the non-native substrate proteins and provides a physical environment optimized to promote and accelerate protein folding. The protein is Chaperonin GroEL 5 of Mesorhizobium japonicum (strain LMG 29417 / CECT 9101 / MAFF 303099) (Mesorhizobium loti (strain MAFF 303099)).